A 472-amino-acid chain; its full sequence is uncharacterized protein (472 aa).

Belongs to the AllG family.

This is an uncharacterized protein from Escherichia coli (strain K12).